Consider the following 453-residue polypeptide: Growth/differentiation factor 9 (453 aa).

Positions 1–27 are cleaved as a signal peptide; that stretch reads MALPNKFFLWFCCFAWLCFPISLDSLP. Positions 28–318 are excised as a propeptide; it reads SRGEAQIVAR…EGVRSSRHRR (291 aa). N-linked (GlcNAc...) asparagine glycosylation is found at Asn163, Asn236, Asn255, and Asn269. A disordered region spans residues 282 to 328; sequence LHPKRKPSQGPDQRRELSAYPVGEEAAEGVRSSRHRRDQESVSSELK. Residues 318–328 are compositionally biased toward basic and acidic residues; the sequence is RDQESVSSELK. Asn337 carries N-linked (GlcNAc...) asparagine glycosylation. 3 cysteine pairs are disulfide-bonded: Cys352–Cys418, Cys381–Cys450, and Cys385–Cys452.

It belongs to the TGF-beta family. In terms of assembly, homodimer or heterodimer (Potential). But, in contrast to other members of this family, cannot be disulfide-linked. In terms of processing, phosphorylated; phosphorylation is critical for GDF9 function.

It localises to the secreted. In terms of biological role, required for ovarian folliculogenesis. This Capra hircus (Goat) protein is Growth/differentiation factor 9 (GDF9).